A 97-amino-acid chain; its full sequence is Large ribosomal subunit protein bL28 (97 aa).

The protein belongs to the bacterial ribosomal protein bL28 family.

This Rickettsia bellii (strain OSU 85-389) protein is Large ribosomal subunit protein bL28.